We begin with the raw amino-acid sequence, 269 residues long: Tryptophan synthase alpha chain (269 aa).

Residues Glu49 and Asp60 each act as proton acceptor in the active site.

Belongs to the TrpA family. As to quaternary structure, tetramer of two alpha and two beta chains.

The enzyme catalyses (1S,2R)-1-C-(indol-3-yl)glycerol 3-phosphate + L-serine = D-glyceraldehyde 3-phosphate + L-tryptophan + H2O. It participates in amino-acid biosynthesis; L-tryptophan biosynthesis; L-tryptophan from chorismate: step 5/5. Functionally, the alpha subunit is responsible for the aldol cleavage of indoleglycerol phosphate to indole and glyceraldehyde 3-phosphate. The sequence is that of Tryptophan synthase alpha chain from Actinobacillus pleuropneumoniae serotype 3 (strain JL03).